The primary structure comprises 208 residues: FMN-dependent NADH:quinone oxidoreductase 1 (208 aa).

Belongs to the azoreductase type 1 family. As to quaternary structure, homodimer. The cofactor is FMN.

It catalyses the reaction 2 a quinone + NADH + H(+) = 2 a 1,4-benzosemiquinone + NAD(+). The catalysed reaction is N,N-dimethyl-1,4-phenylenediamine + anthranilate + 2 NAD(+) = 2-(4-dimethylaminophenyl)diazenylbenzoate + 2 NADH + 2 H(+). In terms of biological role, quinone reductase that provides resistance to thiol-specific stress caused by electrophilic quinones. Also exhibits azoreductase activity. Catalyzes the reductive cleavage of the azo bond in aromatic azo compounds to the corresponding amines. The sequence is that of FMN-dependent NADH:quinone oxidoreductase 1 from Bacillus licheniformis (strain ATCC 14580 / DSM 13 / JCM 2505 / CCUG 7422 / NBRC 12200 / NCIMB 9375 / NCTC 10341 / NRRL NRS-1264 / Gibson 46).